The following is an 853-amino-acid chain: Bromodomain-containing protein bet-1 (853 aa).

Residues 1-19 (MSEGSGDQSQQRPWASPRQ) show a composition bias toward polar residues. Disordered stretches follow at residues 1–22 (MSEG…QQPI) and 141–245 (SLEQ…LRAK). Residues 39–145 (RHTNKLDYIM…EVIKKSLEQA (107 aa)) form the Bromo 1 domain. The span at 141–153 (SLEQAPREEHDMD) shows a compositional bias: basic and acidic residues. 2 stretches are compositionally biased toward low complexity: residues 166–175 (SDGGSKSSSS) and 192–215 (SEVS…SVAA). A Glycyl lysine isopeptide (Lys-Gly) (interchain with G-Cter in SUMO) cross-link involves residue Lys-252. Residues 257–366 (QPLLPSMKPC…EVFDRRWAEL (110 aa)) form the Bromo 2 domain. Positions 369–381 (SSSRASSVAPQSA) are enriched in low complexity. Residues 369 to 418 (SSSRASSVAPQSAPIAPTPKVAKSSAPKEPKESRKEHKKETTFEASGAKS) are disordered. Residues 394–410 (APKEPKESRKEHKKETT) show a composition bias toward basic and acidic residues. Residues 419-458 (EDLMQINNALSMIREREEKLKAELAAAQAIKDKLTSVKNR) are a coiled coil. The NET domain maps to 516-601 (DSDDEDNKMA…TIPTLNGNGD (86 aa)). 2 disordered regions span residues 594–814 (PTLN…DEQT) and 819–838 (MRME…VSLS). Low complexity predominate over residues 612 to 624 (TSSGATGSKGSSS). Residues 684-696 (QPPSTSREWNQSS) are compositionally biased toward polar residues. Residues 708–736 (QPPMSRVPASSSTSVSAIGKNNAAASSNS) show a composition bias toward low complexity. Over residues 786–807 (QFFQSQPTTSATIRSPTESQPG) the composition is skewed to polar residues. Positions 819-832 (MRMEAKRARQKEDE) are enriched in basic and acidic residues.

It belongs to the BET family. As to quaternary structure, interacts with acetylated histone H4. Interacts (via BROMO domain 2) with smo-1 and ubc-9. In terms of tissue distribution, expressed in T-cells, Q-cells, V5-cells and their descendants such as somatic gonad and syncytium.

The protein localises to the nucleus. The protein resides in the chromosome. Its function is as follows. Required for the establishment and maintenance of stable cell fate in several lineages including V5.pa, T, Z1/Z4 and QR lineages probably by repressing the expression of cell fate determinants. Required to maintain non-distal tip cell (DTC) fate of somatic gonadal cells through the htz-1-mediated repression of transcription factor ceh-22. Regulates the subnuclear localization of histone variant htz-1 in somatic gonadal cells. Plays a role in the attenuation of the let-60/ras pathway, probably by preventing expression of activators of the pathway. Involved in adult locomotion. Acts together with the sumoylation pathway to prevent muscle myosin depletion in aging adults probably by preventing myoblast growth factor receptor egl-15 overexpression. May play a role in vulva development. In Caenorhabditis elegans, this protein is Bromodomain-containing protein bet-1.